A 325-amino-acid polypeptide reads, in one-letter code: Helicase VP6-A (325 aa).

Disordered regions lie at residues 1–122 (MLLA…GATG) and 185–230 (DLRR…EPAR). Composition is skewed to basic and acidic residues over residues 8 to 18 (VIKRSSEELKQ), 32 to 54 (EGGK…KDGE), 61 to 79 (GQKE…DRRI), and 92 to 105 (LGER…RGDG). Residue lysine 106 coordinates ATP. Residues 106-122 (KVGGGGGDADAGVGATG) are compositionally biased toward gly residues. Composition is skewed to basic and acidic residues over residues 185-203 (DLRR…ERGG) and 211-229 (HGDA…EEPA).

Belongs to the orbivirus VP6 family. In terms of assembly, homohexamer.

Its subcellular location is the virion. The enzyme catalyses ATP + H2O = ADP + phosphate + H(+). ATP dependent RNA helicase essential for RNA packaging and viral transcription. Possesses ss- and dsRNA-binding capacity. The chain is Helicase VP6-A (Segment-9) from Bluetongue virus 17 (isolate USA) (BTV 17).